The chain runs to 63 residues: Megourin-1 (63 aa).

In terms of assembly, monomer. Contains four disulfide bonds.

The protein localises to the secreted. Its function is as follows. Has antimicrobial activity against Gram-positive bacteria and fungi. In Megoura viciae (Vetch aphid), this protein is Megourin-1.